A 610-amino-acid polypeptide reads, in one-letter code: Methionine--tRNA ligase (610 aa).

Positions 12–22 (PYANGPRHIGH) match the 'HIGH' region motif. The Zn(2+) site is built by C144, C147, C157, and C160. The short motif at 348-352 (KFSSS) is the 'KMSKS' region element. Residue S351 participates in ATP binding.

The protein belongs to the class-I aminoacyl-tRNA synthetase family. MetG type 1 subfamily. As to quaternary structure, monomer. Zn(2+) serves as cofactor.

Its subcellular location is the cytoplasm. The catalysed reaction is tRNA(Met) + L-methionine + ATP = L-methionyl-tRNA(Met) + AMP + diphosphate. Is required not only for elongation of protein synthesis but also for the initiation of all mRNA translation through initiator tRNA(fMet) aminoacylation. In Corynebacterium glutamicum (strain R), this protein is Methionine--tRNA ligase.